The primary structure comprises 34 residues: Egg-releasing peptide (34 aa).

The protein is Egg-releasing peptide of Aplysia californica (California sea hare).